Here is a 205-residue protein sequence, read N- to C-terminus: Heat shock protein beta-11 (205 aa).

A sHSP domain is found at 67 to 180 (VSPMTTFKPI…NERVIPITYT (114 aa)). Positions 184-205 (KNPALQNSEPENQAVEAEAAEN) are disordered. The span at 192 to 205 (EPENQAVEAEAAEN) shows a compositional bias: low complexity.

It belongs to the small heat shock protein (HSP20) family. Expressed specifically in the rostral-most somites at 24 hpf. At 48 hpf, expression continues in the rostral-most somites and also in the notochord. Somite expression was restricted to the vicinity of the horizontal myoseptum. In adults, expressed in the heart.

The polypeptide is Heat shock protein beta-11 (hspb11) (Danio rerio (Zebrafish)).